We begin with the raw amino-acid sequence, 466 residues long: Rhodanese-like domain-containing protein 4, chloroplastic (466 aa).

Residues 1–15 (MEALKTATFSPMSVL) constitute a chloroplast transit peptide. The segment at 1–35 (MEALKTATFSPMSVLSEKRSEPRKPFSLPNLFPPK) is disordered. The N-terminal 54 residues, 16-69 (SEKRSEPRKPFSLPNLFPPKSQRPISQESFLKRFNGGLALLTSVLSSATAPAKS), are a transit peptide targeting the thylakoid. Residues 103-123 (PLVIAGGVAALAVPFVLSQVL) form a helical membrane-spanning segment. In terms of domain architecture, Rhodanese spans 144–250 (TDDNAQLLDI…WLNSSLPWIE (107 aa)). The chain crosses the membrane as a helical span at residues 277 to 297 (VSVALGVAAAAGLSVFAFTEI). Residues 373 to 384 (EAESATATTTTV) show a composition bias toward low complexity. 2 disordered regions span residues 373–392 (EAES…PEPE) and 426–466 (AQVI…PSQP). Pro residues predominate over residues 455 to 466 (LKPPSSPMPSQP).

Component of high molecular weight thylakoid LFNRs-containing protein complexes containing LIR1, LFNR1, LFNR2, TIC62 and TROL proteins. In terms of tissue distribution, expressed in leaves and stems, and at lower levels in flowers and siliques (at protein level).

The protein resides in the plastid. The protein localises to the chloroplast envelope. It is found in the chloroplast thylakoid membrane. Functionally, rhodanese domain-containing protein required for anchoring ferredoxin--NADP reductase to the thylakoid membranes and sustaining efficient linear electron flow (LEF). The polypeptide is Rhodanese-like domain-containing protein 4, chloroplastic (Arabidopsis thaliana (Mouse-ear cress)).